Consider the following 262-residue polypeptide: uncharacterized protein (262 aa).

The region spanning Leu-6–Val-70 is the S4 RNA-binding domain. The Nucleophile role is filled by Asp-108.

Belongs to the pseudouridine synthase RsuA family.

It catalyses the reaction a uridine in RNA = a pseudouridine in RNA. This is an uncharacterized protein from Helicobacter pylori (strain ATCC 700392 / 26695) (Campylobacter pylori).